A 921-amino-acid chain; its full sequence is Protein translocase subunit SecA (921 aa).

Residues Gln-87, 105 to 109 (GEGKT), and Asp-501 contribute to the ATP site. The disordered stretch occupies residues 831 to 886 (PFPVINTETSGPSEEPAGLFSQGTTGGDIPAPQPMAGFPSAAPMPPRPQPVPTGAE). Residues 872-881 (APMPPRPQPV) are compositionally biased toward pro residues. Zn(2+) is bound by residues Cys-905, Cys-907, Cys-916, and His-917.

This sequence belongs to the SecA family. As to quaternary structure, monomer and homodimer. Part of the essential Sec protein translocation apparatus which comprises SecA, SecYEG and auxiliary proteins SecDF-YajC and YidC. Zn(2+) serves as cofactor.

Its subcellular location is the cell inner membrane. It localises to the cytoplasm. The enzyme catalyses ATP + H2O + cellular proteinSide 1 = ADP + phosphate + cellular proteinSide 2.. In terms of biological role, part of the Sec protein translocase complex. Interacts with the SecYEG preprotein conducting channel. Has a central role in coupling the hydrolysis of ATP to the transfer of proteins into and across the cell membrane, serving both as a receptor for the preprotein-SecB complex and as an ATP-driven molecular motor driving the stepwise translocation of polypeptide chains across the membrane. This Gluconobacter oxydans (strain 621H) (Gluconobacter suboxydans) protein is Protein translocase subunit SecA.